Reading from the N-terminus, the 414-residue chain is UPF0754 membrane protein tlr2287 (414 aa).

2 helical membrane passes run 2 to 22 (ADISYWTLLVPPLAGGVIGYF) and 386 to 406 (AIVRLGGILGFLIGVVQAGVL).

The protein belongs to the UPF0754 family.

Its subcellular location is the cell inner membrane. In Thermosynechococcus vestitus (strain NIES-2133 / IAM M-273 / BP-1), this protein is UPF0754 membrane protein tlr2287.